Here is a 679-residue protein sequence, read N- to C-terminus: UvrABC system protein B (679 aa).

The region spanning 31-414 (ENLTDGLAHQ…ELEKSGSEII (384 aa)) is the Helicase ATP-binding domain. An ATP-binding site is contributed by 44–51 (GVTGSGKT). Residues 97 to 120 (YYDYYQPEAYVPSSDTFIEKDASI) carry the Beta-hairpin motif. Positions 436-589 (QVDDLLSEAR…QTKYNEEHGI (154 aa)) constitute a Helicase C-terminal domain. The 36-residue stretch at 639-674 (QQQIKKLEQQMYKFAQDLEFEKAAAIRDQLHQLREQ) folds into the UVR domain.

The protein belongs to the UvrB family. As to quaternary structure, forms a heterotetramer with UvrA during the search for lesions. Interacts with UvrC in an incision complex.

It localises to the cytoplasm. In terms of biological role, the UvrABC repair system catalyzes the recognition and processing of DNA lesions. A damage recognition complex composed of 2 UvrA and 2 UvrB subunits scans DNA for abnormalities. Upon binding of the UvrA(2)B(2) complex to a putative damaged site, the DNA wraps around one UvrB monomer. DNA wrap is dependent on ATP binding by UvrB and probably causes local melting of the DNA helix, facilitating insertion of UvrB beta-hairpin between the DNA strands. Then UvrB probes one DNA strand for the presence of a lesion. If a lesion is found the UvrA subunits dissociate and the UvrB-DNA preincision complex is formed. This complex is subsequently bound by UvrC and the second UvrB is released. If no lesion is found, the DNA wraps around the other UvrB subunit that will check the other stand for damage. The sequence is that of UvrABC system protein B from Haemophilus influenzae (strain ATCC 51907 / DSM 11121 / KW20 / Rd).